Consider the following 326-residue polypeptide: Glycerol-3-phosphate dehydrogenase [NAD(P)+] (326 aa).

NADPH is bound by residues tryptophan 13, arginine 33, and lysine 107. Sn-glycerol 3-phosphate is bound by residues lysine 107, glycine 135, and serine 137. Alanine 139 contributes to the NADPH binding site. Lysine 190, aspartate 243, serine 253, arginine 254, and asparagine 255 together coordinate sn-glycerol 3-phosphate. Lysine 190 acts as the Proton acceptor in catalysis. Arginine 254 lines the NADPH pocket. Residues leucine 273 and glutamate 275 each coordinate NADPH.

This sequence belongs to the NAD-dependent glycerol-3-phosphate dehydrogenase family.

It localises to the cytoplasm. It carries out the reaction sn-glycerol 3-phosphate + NAD(+) = dihydroxyacetone phosphate + NADH + H(+). The enzyme catalyses sn-glycerol 3-phosphate + NADP(+) = dihydroxyacetone phosphate + NADPH + H(+). The protein operates within membrane lipid metabolism; glycerophospholipid metabolism. Catalyzes the reduction of the glycolytic intermediate dihydroxyacetone phosphate (DHAP) to sn-glycerol 3-phosphate (G3P), the key precursor for phospholipid synthesis. The sequence is that of Glycerol-3-phosphate dehydrogenase [NAD(P)+] from Brucella abortus (strain 2308).